A 219-amino-acid polypeptide reads, in one-letter code: Histone H1.4 (219 aa).

Residues 1–15 (MSETAPAAPAAPAPA) show a composition bias toward low complexity. Residues 1 to 41 (MSETAPAAPAAPAPAEKTPVKKKARKAAGGAKRKTSGPPVS) are disordered. Position 2 is an N-acetylserine (Ser2). The residue at position 2 (Ser2) is a Phosphoserine. Lys17 is modified (N6-acetyllysine). The residue at position 18 (Thr18) is a Phosphothreonine. Residues 20 to 35 (VKKKARKAAGGAKRKT) show a composition bias toward basic residues. At Lys26 the chain carries N6-acetyllysine; alternate. Lys26 carries the post-translational modification N6-methyllysine; alternate. Residue Lys34 is modified to N6-(beta-hydroxybutyryl)lysine; alternate. The residue at position 34 (Lys34) is an N6-succinyllysine; alternate. Ser36 is subject to Phosphoserine. The H15 domain occupies 36 to 109 (SGPPVSELIT…GASGSFKLNK (74 aa)). Lys52 is subject to N6-(beta-hydroxybutyryl)lysine. Position 54 is a citrulline (Arg54). N6-(beta-hydroxybutyryl)lysine is present on residues Lys64, Lys85, Lys90, and Lys106. Residues 92–219 (TLVQTKGTGA…KPKKTAAKKK (128 aa)) are disordered. A compositionally biased stretch (basic residues) spans 119-140 (KAKRAGAAKAKKPAGAAKKPKK). Position 146 is a phosphothreonine (Thr146). Basic residues-rich tracts occupy residues 149-160 (KSTKKTPKKAKK) and 168-185 (KKAK…KKAP). ADP-ribosylserine is present on Ser150. Residue Ser187 is modified to Phosphoserine. Over residues 192 to 219 (KTVKPKAAKPKTSKPKAAKPKKTAAKKK) the composition is skewed to basic residues.

The protein belongs to the histone H1/H5 family. In terms of processing, citrullination at Arg-54 (H1R54ci) by PADI4 takes place within the DNA-binding site of H1 and results in its displacement from chromatin and global chromatin decondensation, thereby promoting pluripotency and stem cell maintenance. ADP-ribosylated on Ser-55, Ser-113 and Ser-150 in response to DNA damage. Post-translationally, H1 histones are progressively phosphorylated during the cell cycle, becoming maximally phosphorylated during late G2 phase and M phase, and being dephosphorylated sharply thereafter. In terms of processing, acetylated at Lys-26. Deacetylated at Lys-26 by SIRT1. Hydroxybutyrylation of histones is induced by starvation.

It is found in the nucleus. Its subcellular location is the chromosome. Histone H1 protein binds to linker DNA between nucleosomes forming the macromolecular structure known as the chromatin fiber. Histones H1 are necessary for the condensation of nucleosome chains into higher-order structured fibers. Also acts as a regulator of individual gene transcription through chromatin remodeling, nucleosome spacing and DNA methylation. In Mus musculus (Mouse), this protein is Histone H1.4.